The primary structure comprises 266 residues: Apolipoprotein A-I (266 aa).

An N-terminal signal peptide occupies residues 1–18 (MKAVVLTLAVLFLTGSQA). 2 tandem repeats follow at residues 67-88 (LKLL…EQIG) and 89-110 (PVTQ…QEMS). The segment at 67–266 (LKLLDNWDSL…DEATKKLNSQ (200 aa)) is 10 X approximate tandem repeats. At Met-109 the chain carries Methionine sulfoxide. The 3; half-length repeat unit spans residues 111 to 121 (KDLEEVKKKVQ). Tandem repeats lie at residues 122–143 (PYLD…QKVA), 144–165 (PLGA…EKLS), 166–187 (PLAE…AQLA), 188–209 (PYSE…EGGG), and 210–231 (AALT…EKAK). Residues 232–242 (PALEDLRQGLL) form a 9; half-length repeat. Residues 243-266 (PVLENFRVSLLAAVDEATKKLNSQ) form repeat 10.

It belongs to the apolipoprotein A1/A4/E family. In terms of assembly, homodimer. Interacts with APOA1BP and CLU. Component of a sperm activating protein complex (SPAP), consisting of APOA1, an immunoglobulin heavy chain, an immunoglobulin light chain and albumin. Interacts with NDRG1. Interacts with SCGB3A2. Interacts with NAXE and YJEFN3. Glycosylated. Post-translationally, palmitoylated. In terms of processing, phosphorylation sites are present in the extracellular medium.

It localises to the secreted. Functionally, participates in the reverse transport of cholesterol from tissues to the liver for excretion by promoting cholesterol efflux from tissues and by acting as a cofactor for the lecithin cholesterol acyltransferase (LCAT). As part of the SPAP complex, activates spermatozoa motility. In Mirounga angustirostris (Northern elephant seal), this protein is Apolipoprotein A-I (APOA1).